Reading from the N-terminus, the 404-residue chain is G1/S-specific cyclin-E2 (404 aa).

The segment at 1 to 41 (MSRRSSRLQAKQHAQPNQPDSPQETQIIQAKKRKTAQDVKK) is disordered. A compositionally biased stretch (polar residues) spans 7–28 (RLQAKQHAQPNQPDSPQETQII). Phosphoserine is present on S21. K348 is modified (N6-lactoyllysine). S383 is modified (phosphoserine). The residue at position 392 (T392) is a Phosphothreonine.

This sequence belongs to the cyclin family. Cyclin E subfamily. Interacts with the CDK2 (in vivo) and CDK3 (in vitro) protein kinases to form a serine/threonine kinase holoenzyme complex. The cyclin subunit imparts substrate specificity to the complex. In terms of processing, phosphorylation by CDK2 triggers its release from CDK2 and degradation via the ubiquitin proteasome pathway. Post-translationally, lactylated at Lys-348. Delactylated by SIRT3. As to expression, highest levels in adult testis, thymus and brain. Lower levels in placenta, spleen and colon.

Its subcellular location is the nucleus. Essential for the control of the cell cycle at the late G1 and early S phase. The protein is G1/S-specific cyclin-E2 (Ccne2) of Mus musculus (Mouse).